Here is a 508-residue protein sequence, read N- to C-terminus: Maturase K (508 aa).

It belongs to the intron maturase 2 family. MatK subfamily.

It is found in the plastid. It localises to the chloroplast. Functionally, usually encoded in the trnK tRNA gene intron. Probably assists in splicing its own and other chloroplast group II introns. The protein is Maturase K of Collinsia heterophylla (Purple Chinese houses).